The following is a 197-amino-acid chain: Protein jagunal (197 aa).

Over 1-39 (MATRGGPMVAGTDGNDFEFRQRVAGTYQISLLNKSRLKY) the chain is Cytoplasmic. The helical transmembrane segment at 40 to 60 (CIFFHALLFFVMLAKLTSDIL) threads the bilayer. The Lumenal portion of the chain corresponds to 61–78 (DRLDIFVLEIEELEVPSP). Residues 79–99 (LWWEYVWAGSLLTSFLGLSAA) form a helical membrane-spanning segment. The Cytoplasmic segment spans residues 100 to 109 (RGNKVREMQK). A helical transmembrane segment spans residues 110 to 130 (YMIAILVFAILPLLYCFAYYF). The Lumenal portion of the chain corresponds to 131 to 159 (SDVWEFATMDKSVELDETDIFIWRGYPYG). A helical membrane pass occupies residues 160–180 (VFWYAFCFVGFQVHGFTLYFA). Residues 181-197 (YNLVKVWKARTATRKFQ) are Cytoplasmic-facing.

Belongs to the jagunal family.

It is found in the endoplasmic reticulum membrane. Functionally, required for endoplasmic reticulum organization and proper vesicular traffic during vitellogenesis. Required for oocyte and bristle growth. The sequence is that of Protein jagunal from Drosophila pseudoobscura pseudoobscura (Fruit fly).